The sequence spans 314 residues: Aspartate carbamoyltransferase catalytic subunit (314 aa).

Carbamoyl phosphate contacts are provided by Arg-55 and Thr-56. Residue Lys-83 participates in L-aspartate binding. Residues Arg-105, His-139, and Gln-142 each coordinate carbamoyl phosphate. L-aspartate-binding residues include Arg-172 and Arg-226. Residues Gly-267 and Pro-268 each coordinate carbamoyl phosphate.

This sequence belongs to the aspartate/ornithine carbamoyltransferase superfamily. ATCase family. In terms of assembly, heterododecamer (2C3:3R2) of six catalytic PyrB chains organized as two trimers (C3), and six regulatory PyrI chains organized as three dimers (R2).

The enzyme catalyses carbamoyl phosphate + L-aspartate = N-carbamoyl-L-aspartate + phosphate + H(+). The protein operates within pyrimidine metabolism; UMP biosynthesis via de novo pathway; (S)-dihydroorotate from bicarbonate: step 2/3. Functionally, catalyzes the condensation of carbamoyl phosphate and aspartate to form carbamoyl aspartate and inorganic phosphate, the committed step in the de novo pyrimidine nucleotide biosynthesis pathway. The protein is Aspartate carbamoyltransferase catalytic subunit of Rhodococcus erythropolis (strain PR4 / NBRC 100887).